Here is a 389-residue protein sequence, read N- to C-terminus: Flap endonuclease 1 (389 aa).

The segment at 1–110 is N-domain; sequence MGIKGLMKLL…GELAKRSDRR (110 aa). Mg(2+) is bound at residue D35. DNA-binding residues include R48 and R76. D92 serves as a coordination point for Mg(2+). Residues 103 to 124 form a disordered region; sequence LAKRSDRRQEAQKALEEATEKG. The segment at 128 to 259 is I-domain; it reads DIDRFNKRLV…KKAYAGIKEH (132 aa). Residues E164, E166, D185, and D187 each coordinate Mg(2+). E164 serves as a coordination point for DNA. Residues G237 and D239 each coordinate DNA. A Mg(2+)-binding site is contributed by D239. Residues 350 to 358 form an interaction with PCNA region; sequence SQKRLDSFF. Residues 362 to 389 form a disordered region; it reads PSANGAKKRKAPAAKGGKKAATAKKGKK. Basic residues predominate over residues 367–389; the sequence is AKKRKAPAAKGGKKAATAKKGKK.

It belongs to the XPG/RAD2 endonuclease family. FEN1 subfamily. As to quaternary structure, interacts with PCNA. Three molecules of FEN1 bind to one PCNA trimer with each molecule binding to one PCNA monomer. PCNA stimulates the nuclease activity without altering cleavage specificity. Mg(2+) serves as cofactor. Phosphorylated. Phosphorylation upon DNA damage induces relocalization to the nuclear plasma.

The protein resides in the nucleus. Its subcellular location is the nucleolus. It localises to the nucleoplasm. The protein localises to the mitochondrion. In terms of biological role, structure-specific nuclease with 5'-flap endonuclease and 5'-3' exonuclease activities involved in DNA replication and repair. During DNA replication, cleaves the 5'-overhanging flap structure that is generated by displacement synthesis when DNA polymerase encounters the 5'-end of a downstream Okazaki fragment. It enters the flap from the 5'-end and then tracks to cleave the flap base, leaving a nick for ligation. Also involved in the long patch base excision repair (LP-BER) pathway, by cleaving within the apurinic/apyrimidinic (AP) site-terminated flap. Acts as a genome stabilization factor that prevents flaps from equilibrating into structures that lead to duplications and deletions. Also possesses 5'-3' exonuclease activity on nicked or gapped double-stranded DNA, and exhibits RNase H activity. Also involved in replication and repair of rDNA and in repairing mitochondrial DNA. The polypeptide is Flap endonuclease 1 (Phytophthora infestans (strain T30-4) (Potato late blight agent)).